Consider the following 513-residue polypeptide: ATP synthase subunit alpha (513 aa).

Residue 169–176 (GDRQTGKT) coordinates ATP.

The protein belongs to the ATPase alpha/beta chains family. In terms of assembly, F-type ATPases have 2 components, CF(1) - the catalytic core - and CF(0) - the membrane proton channel. CF(1) has five subunits: alpha(3), beta(3), gamma(1), delta(1), epsilon(1). CF(0) has three main subunits: a(1), b(2) and c(9-12). The alpha and beta chains form an alternating ring which encloses part of the gamma chain. CF(1) is attached to CF(0) by a central stalk formed by the gamma and epsilon chains, while a peripheral stalk is formed by the delta and b chains.

The protein resides in the cell inner membrane. It catalyses the reaction ATP + H2O + 4 H(+)(in) = ADP + phosphate + 5 H(+)(out). Produces ATP from ADP in the presence of a proton gradient across the membrane. The alpha chain is a regulatory subunit. This Actinobacillus pleuropneumoniae serotype 3 (strain JL03) protein is ATP synthase subunit alpha.